A 317-amino-acid polypeptide reads, in one-letter code: tRNA(Ile)-lysidine synthase (317 aa).

30-35 (SGGSDS) is an ATP binding site.

This sequence belongs to the tRNA(Ile)-lysidine synthase family.

The protein localises to the cytoplasm. The catalysed reaction is cytidine(34) in tRNA(Ile2) + L-lysine + ATP = lysidine(34) in tRNA(Ile2) + AMP + diphosphate + H(+). Functionally, ligates lysine onto the cytidine present at position 34 of the AUA codon-specific tRNA(Ile) that contains the anticodon CAU, in an ATP-dependent manner. Cytidine is converted to lysidine, thus changing the amino acid specificity of the tRNA from methionine to isoleucine. This Chlamydia abortus (strain DSM 27085 / S26/3) (Chlamydophila abortus) protein is tRNA(Ile)-lysidine synthase.